The sequence spans 186 residues: NADH-quinone oxidoreductase subunit C (186 aa).

Residues 166–186 (DSLTPWKGVGRPSDPFDGRKE) form a disordered region.

This sequence belongs to the complex I 30 kDa subunit family. NDH-1 is composed of 14 different subunits. Subunits NuoB, C, D, E, F, and G constitute the peripheral sector of the complex.

Its subcellular location is the cell inner membrane. The catalysed reaction is a quinone + NADH + 5 H(+)(in) = a quinol + NAD(+) + 4 H(+)(out). NDH-1 shuttles electrons from NADH, via FMN and iron-sulfur (Fe-S) centers, to quinones in the respiratory chain. The immediate electron acceptor for the enzyme in this species is believed to be ubiquinone. Couples the redox reaction to proton translocation (for every two electrons transferred, four hydrogen ions are translocated across the cytoplasmic membrane), and thus conserves the redox energy in a proton gradient. The protein is NADH-quinone oxidoreductase subunit C of Neorickettsia sennetsu (strain ATCC VR-367 / Miyayama) (Ehrlichia sennetsu).